The primary structure comprises 193 residues: Outer membrane lipoprotein DolP (193 aa).

The signal sequence occupies residues 1–21; sequence MTLSPLKKLAILLGATIFLQG. Cys-22 is lipidated: N-palmitoyl cysteine. Residue Cys-22 is the site of S-diacylglycerol cysteine attachment. BON domains follow at residues 48–117 and 126–193; these read DDET…TVSP and KDSW…KYLD.

Belongs to the lipoprotein DolP family.

Its subcellular location is the cell outer membrane. Functionally, plays an important role in maintaining outer membrane integrity. This is Outer membrane lipoprotein DolP from Haemophilus influenzae (strain ATCC 51907 / DSM 11121 / KW20 / Rd).